The chain runs to 614 residues: Vitamin B12 transporter BtuB (614 aa).

The signal sequence occupies residues 1 to 20 (MIKKASLLTACSVTAFSAWA). Positions 26–33 (DTLVVTAN) match the TonB box motif. The TBDR plug domain occupies 38-152 (PRSTVLAPTT…IGGVVNIITT (115 aa)). Cyanocob(III)alamin is bound by residues Leu-83, Ser-85, Asn-92, and 110–111 (VS). The TBDR beta-barrel domain occupies 155 to 614 (EPGTEISAGW…EYTLSGSYTF (460 aa)). The next 3 beta stranded transmembrane spans lie at 158–165 (TEISAGWG), 169–178 (YQNYDVSTQQ), and 184–195 (TRVTLLGDYAHT). Ca(2+)-binding residues include Asp-199, Gln-211, Asp-213, and Asp-215. 2 consecutive transmembrane segments (beta stranded) span residues 217-227 (FLSKTLYGALE) and 232-248 (DAWSGFVRGYGYDNRTN). Ca(2+)-binding residues include Tyr-249 and Asp-250. Cyanocob(III)alamin is bound at residue Ala-251. Position 261 (Asp-261) interacts with Ca(2+). Beta stranded transmembrane passes span 263–277 (RKLYSQSWDAGLRYN), 279–296 (ELIKSQLITSYSHSKDYN), 309–325 (TLDEMKQYTVQWANNVI), 328–337 (HGSIGAGVDW), 353–369 (YDQRNTGIYLTGLQQVG), 371–381 (FTFEGAARSDD), 385–400 (FGRHGTWQTSAGWEFI), 403–417 (YRFIASYGTSYKAPN), 434–443 (KSKQWEGAFE), 449–458 (VNWRISGYRN), 473–490 (YYNEGKARIKGVEATANF), 494–509 (PLTHTVSYDYVDARNA), 517–529 (RRAKQQVKYQLDW), and 535–550 (DWGITYQYLGTRYDKD). Thr-309 serves as a coordination point for cyanocob(III)alamin. Arg-517 provides a ligand contact to cyanocob(III)alamin. A cyanocob(III)alamin-binding site is contributed by Tyr-551. Beta stranded transmembrane passes span 558 to 572 (TVKMGGVSLWDLAVA), 585 to 596 (IANLFDKDYETV), and 602 to 614 (AGREYTLSGSYTF). The short motif at 597 to 614 (YGYQTAGREYTLSGSYTF) is the TonB C-terminal box element.

It belongs to the TonB-dependent receptor family. BtuB (TC 1.B.14.3.1) subfamily.

The protein resides in the cell outer membrane. In terms of biological role, involved in the active translocation of vitamin B12 (cyanocobalamin) across the outer membrane to the periplasmic space. It derives its energy for transport by interacting with the trans-periplasmic membrane protein TonB. This Escherichia coli O9:H4 (strain HS) protein is Vitamin B12 transporter BtuB.